A 796-amino-acid polypeptide reads, in one-letter code: Ent-copalyl diphosphate synthase 4 (796 aa).

The transit peptide at 1–23 (MSSSSIVTSLLRPTTAADGVLPR) directs the protein to the chloroplast. Position 240 (lysine 240) interacts with substrate. Aspartate 371 and aspartate 373 together coordinate Mg(2+). A DXDD motif motif is present at residues 371–374 (DVDD). A substrate-binding site is contributed by lysine 457.

The protein belongs to the terpene synthase family. Tpsc subfamily. Requires Mg(2+) as cofactor. Highly expressed in leaves, and, at low levels, in stems, but barely in roots and flowers.

It localises to the plastid. The protein localises to the chloroplast. The enzyme catalyses (2E,6E,10E)-geranylgeranyl diphosphate = ent-copalyl diphosphate. It participates in secondary metabolite biosynthesis; terpenoid biosynthesis. In terms of biological role, involved in the biosynthesis of ent-kaurene diterpenoids natural products such as oridonin, miltiradiene, eriocalyxin B and nezukol, known to exhibit antitumor, anti-inflammatory and antibacterial activities. Catalyzes the conversion of (2E,6E,10E)-geranylgeranyl diphosphate (GGPP) to ent-copalyl diphosphate (ent-CPP). The protein is Ent-copalyl diphosphate synthase 4 of Isodon rubescens (Rabdosia rubescens).